A 99-amino-acid polypeptide reads, in one-letter code: Aspartyl/glutamyl-tRNA(Asn/Gln) amidotransferase subunit C (99 aa).

Belongs to the GatC family. As to quaternary structure, heterotrimer of A, B and C subunits.

It carries out the reaction L-glutamyl-tRNA(Gln) + L-glutamine + ATP + H2O = L-glutaminyl-tRNA(Gln) + L-glutamate + ADP + phosphate + H(+). The catalysed reaction is L-aspartyl-tRNA(Asn) + L-glutamine + ATP + H2O = L-asparaginyl-tRNA(Asn) + L-glutamate + ADP + phosphate + 2 H(+). Its function is as follows. Allows the formation of correctly charged Asn-tRNA(Asn) or Gln-tRNA(Gln) through the transamidation of misacylated Asp-tRNA(Asn) or Glu-tRNA(Gln) in organisms which lack either or both of asparaginyl-tRNA or glutaminyl-tRNA synthetases. The reaction takes place in the presence of glutamine and ATP through an activated phospho-Asp-tRNA(Asn) or phospho-Glu-tRNA(Gln). This is Aspartyl/glutamyl-tRNA(Asn/Gln) amidotransferase subunit C from Rhodococcus opacus (strain B4).